A 187-amino-acid polypeptide reads, in one-letter code: Chlorobenzene dioxygenase subunit beta (187 aa).

This sequence belongs to the bacterial ring-hydroxylating dioxygenase beta subunit family. As to quaternary structure, this dioxygenase system consists of four proteins: the two subunits of the oxygenase component (TecA1 and TecA2), a ferredoxin (TecA3) and a ferredoxin reductase (TecA4).

It catalyses the reaction chlorobenzene + NADH + O2 + H(+) = (1R,2R)-3-chlorocyclohexa-3,5-diene-1,2-diol + NAD(+). It functions in the pathway aromatic compound metabolism. Functionally, part of the oxygenase component of the chlorobenzene dioxygenase system that catalyzes the dihydroxylation of a range of aromatic compounds, including chlorinated benzenes and toluenes, and dinuclear aromatics such as biphenyl and dibenzo-p-dioxin. The beta subunit is not directly involved in the control of substrate specificity. The polypeptide is Chlorobenzene dioxygenase subunit beta (Cupriavidus sp. (strain PS12)).